Reading from the N-terminus, the 414-residue chain is Ornithine aminotransferase (414 aa).

Residues Cys-154 and Cys-163 are joined by a disulfide bond. Lys-262 bears the N6-(pyridoxal phosphate)lysine mark.

Belongs to the class-III pyridoxal-phosphate-dependent aminotransferase family. In terms of assembly, homodimer. The cofactor is pyridoxal 5'-phosphate. In terms of processing, the disulfide bond between Cys-154 and Cys-163 is reduced by TRX1 which increases OAT catalytic activity.

It localises to the cytoplasm. It carries out the reaction a 2-oxocarboxylate + L-ornithine = L-glutamate 5-semialdehyde + an L-alpha-amino acid. It catalyses the reaction L-ornithine + 2-oxoglutarate = L-glutamate 5-semialdehyde + L-glutamate. The protein operates within amino-acid biosynthesis; L-proline biosynthesis; L-glutamate 5-semialdehyde from L-ornithine: step 1/1. Its activity is regulated as follows. Unlike for mammalian OATs, activity is increased by TRX1-mediated reduction of the disulfide bond between Cys-154 and Cys-163. Binding to TRX1 may also induce conformational changes that facilitate substrate binding. Its function is as follows. The enzyme has a very narrow substrate specificity and can only catalyze the transamination of alpha-ketoglutarate with ornithine or N-acetylornithine and, to a lesser extent, of glutamate-5-semialdehyde with glutamate and alanine. The protein is Ornithine aminotransferase of Plasmodium falciparum (isolate 3D7).